The sequence spans 727 residues: Two-component response regulator-like APRR7 (727 aa).

Residues 1–47 (MNANEEGEGSRYPITDRKTGETKFDRVESRTEKHSEEEKTNGITMDV) are disordered. Residues 14-40 (ITDRKTGETKFDRVESRTEKHSEEEKT) show a composition bias toward basic and acidic residues. In terms of domain architecture, Response regulatory spans 79–197 (RVLLVENDDC…ELKILWQHVW (119 aa)). 6 disordered regions span residues 203-265 (SSGS…KKAV), 291-312 (NPEFPSNQLVAPPAEKETQEHD), 339-416 (KDEP…KTLD), 464-487 (SRYNPASNANKISGGNLGSTSLQD), 509-560 (ESLP…QPLP), and 606-670 (VNGS…SQRE). The span at 246–259 (ASDGSSDGSGAQSS) shows a compositional bias: low complexity. 3 stretches are compositionally biased toward polar residues: residues 344–353 (SKTTGIMRQD), 467–487 (NPASNANKISGGNLGSTSLQD), and 519–535 (VGSNNFDMSSTTENNAF). The segment covering 538-555 (PGAPKVSSAGSSSVKHSS) has biased composition (low complexity). The segment covering 641–657 (GKNGNGDGSGSGSGSGS) has biased composition (gly residues). One can recognise a CCT domain in the interval 669 to 711 (REAALTKFRQKRKERCFRKKVRYQSRKKLAEQRPRVRGQFVRK).

Belongs to the ARR-like family. Post-translationally, phosphorylated. Phosphorylation varies throughout the diurnal cycle.

It localises to the nucleus. Its function is as follows. Transcriptional repressor of CCA1 and LHY, and positive regulator of LWD1 and LWD2 expression. Represses the expression of other clock proteins and master regulators of plant growth, development and response to abiotic stress. Involved in the positive and negative feedback loops of the circadian clock. Controls photoperiodic flowering response and temperature compensation. Expression of several members of the ARR-like family is controlled by circadian rhythm. APRR9, APRR7, and APRR5 coordinately act on the upstream region of the target genes to repress their expression from noon until midnight. The particular coordinated sequential expression of APRR9, APRR7, APRR5, APRR3 and APPR1 result to circadian waves that may be at the basis of the endogenous circadian clock. This Arabidopsis thaliana (Mouse-ear cress) protein is Two-component response regulator-like APRR7 (APRR7).